Reading from the N-terminus, the 244-residue chain is Phosphoadenosine 5'-phosphosulfate reductase (244 aa).

Residue cysteine 239 is the Nucleophile; cysteine thiosulfonate intermediate of the active site.

It belongs to the PAPS reductase family. CysH subfamily.

It is found in the cytoplasm. The enzyme catalyses [thioredoxin]-disulfide + sulfite + adenosine 3',5'-bisphosphate + 2 H(+) = [thioredoxin]-dithiol + 3'-phosphoadenylyl sulfate. It functions in the pathway sulfur metabolism; hydrogen sulfide biosynthesis; sulfite from sulfate: step 3/3. In terms of biological role, catalyzes the formation of sulfite from phosphoadenosine 5'-phosphosulfate (PAPS) using thioredoxin as an electron donor. The polypeptide is Phosphoadenosine 5'-phosphosulfate reductase (Salmonella typhi).